Consider the following 182-residue polypeptide: Dephospho-CoA kinase (182 aa).

The 179-residue stretch at 4 to 182 folds into the DPCK domain; the sequence is VVAITGGIGS…IINNDHKIMT (179 aa). ATP is bound at residue 12-17; that stretch reads GSGKTT.

It belongs to the CoaE family.

The protein resides in the cytoplasm. The enzyme catalyses 3'-dephospho-CoA + ATP = ADP + CoA + H(+). It functions in the pathway cofactor biosynthesis; coenzyme A biosynthesis; CoA from (R)-pantothenate: step 5/5. Functionally, catalyzes the phosphorylation of the 3'-hydroxyl group of dephosphocoenzyme A to form coenzyme A. The sequence is that of Dephospho-CoA kinase from Aliivibrio fischeri (strain ATCC 700601 / ES114) (Vibrio fischeri).